The sequence spans 205 residues: Small ribosomal subunit protein uS4 (205 aa).

Residues 14–49 (RMGENIWGRPKSPVNRREYGPGQHGQRRKGKMSDFG) are disordered. The S4 RNA-binding domain maps to 94–157 (SRLDAIVYRA…KQLVTVLEAV (64 aa)).

It belongs to the universal ribosomal protein uS4 family. In terms of assembly, part of the 30S ribosomal subunit. Contacts protein S5. The interaction surface between S4 and S5 is involved in control of translational fidelity.

In terms of biological role, one of the primary rRNA binding proteins, it binds directly to 16S rRNA where it nucleates assembly of the body of the 30S subunit. With S5 and S12 plays an important role in translational accuracy. The sequence is that of Small ribosomal subunit protein uS4 from Agrobacterium fabrum (strain C58 / ATCC 33970) (Agrobacterium tumefaciens (strain C58)).